The primary structure comprises 297 residues: MKTLVVALGGNALLQRGEALTAENQYRNIASAVPALARLARSYRLAIVHGNGPQVGLLALQNLAWKEVEPYPLDVLVAESQGMIGYMLAQSLSAQPQMPHVTTVLTRIEVSPDDPAFLQPEKFIGPVYQPEEQEALEATYGWQMKRDGKYLRRVVASPQPRKILDSEAIELLLKEGHVVICSGGGGVPVTEDGAGSEAVIDKDLAAALLAEQINADGLVILTDADAVYENWGTPQQRAIRHATPDELAPFAKADGSMGPKVTAVSGYVRSRGKPAWIGALSRIEETLAGEAGTCISL.

This sequence belongs to the carbamate kinase family.

The protein resides in the cytoplasm. It carries out the reaction hydrogencarbonate + NH4(+) + ATP = carbamoyl phosphate + ADP + H2O + H(+). The enzyme catalyses carbamate + ATP = carbamoyl phosphate + ADP. The catalysed reaction is hydrogencarbonate + NH4(+) = carbamate + H2O + H(+). Its pathway is nitrogen metabolism; (S)-allantoin degradation. Kinase involved in the anaerobic nitrogen utilization via the assimilation of allantoin. Catalyzes the transfer of a phosphate group from carbamoyl phosphate to ADP to produce ATP and leave carbamate, which spontaneously hydrolyzes to ammonia and hydrogencarbonate. In Escherichia coli O6:H1 (strain CFT073 / ATCC 700928 / UPEC), this protein is Carbamate kinase.